A 987-amino-acid polypeptide reads, in one-letter code: Mediator of RNA polymerase II transcription subunit 24 (987 aa).

Short sequence motifs (LXXLL motif) lie at residues 128–132 (LHWLL), 344–348 (LTPLL), 446–450 (LDLLL), 555–559 (LVALL), 786–790 (LPGLL), and 855–859 (LMRLL). A phosphoserine mark is found at Ser-860 and Ser-871.

The protein belongs to the Mediator complex subunit 24 family. Component of the Mediator complex, which is composed of MED1, MED4, MED6, MED7, MED8, MED9, MED10, MED11, MED12, MED13, MED13L, MED14, MED15, MED16, MED17, MED18, MED19, MED20, MED21, MED22, MED23, MED24, MED25, MED26, MED27, MED29, MED30, MED31, CCNC, CDK8 and CDC2L6/CDK11. The MED12, MED13, CCNC and CDK8 subunits form a distinct module termed the CDK8 module. Mediator containing the CDK8 module is less active than Mediator lacking this module in supporting transcriptional activation. Individual preparations of the Mediator complex lacking one or more distinct subunits have been variously termed ARC, CRSP, DRIP, PC2, SMCC and TRAP. Interacts with AR. Interacts with MED1 and MED10. In terms of tissue distribution, expressed in the adrenal gland, brain, epididymis, heart, kidney, liver, ovary, pancreas, prostate, skeletal muscle, small intestine, spleen, stomach, testis and thymus.

It is found in the nucleus. Component of the Mediator complex, a coactivator involved in the regulated transcription of nearly all RNA polymerase II-dependent genes. Mediator functions as a bridge to convey information from gene-specific regulatory proteins to the basal RNA polymerase II transcription machinery. Mediator is recruited to promoters by direct interactions with regulatory proteins and serves as a scaffold for the assembly of a functional preinitiation complex with RNA polymerase II and the general transcription factors. Required for basal and activator-dependent transcription. The polypeptide is Mediator of RNA polymerase II transcription subunit 24 (Med24) (Mus musculus (Mouse)).